The sequence spans 305 residues: Pseudomurein endoisopeptidase (305 aa).

Pseudomurein-binding repeat stretches follow at residues 3–34, 39–70, 87–116, and 121–152; these read SNSV…VIFI, GESI…IVYV, YVSI…VVFI, and GPSV…IVYV. Residues Cys213, His248, and Asp272 contribute to the active site.

The protein belongs to the Psimunavirus Pseudomurein endoisopeptidase family. In terms of assembly, monomer. It depends on Ca(2+) as a cofactor.

Its function is as follows. Cysteine protease that cleaves the cell wall of its host methanogen under hydrogen limitation of the latter (autolysis). Cleaves the epsilon-Ala-Lys isopeptide bond in the oligopeptides of pseudomurein. The chain is Pseudomurein endoisopeptidase (peiP) from Methanobacterium phage psiM2 (PsiM2).